We begin with the raw amino-acid sequence, 469 residues long: F-box only protein 3 (469 aa).

One can recognise an F-box domain in the interval proline 10–histidine 56. The ApaG domain occupies valine 278–valine 408. Positions glutamate 419–glutamate 449 are enriched in acidic residues. The tract at residues glutamate 419–arginine 454 is disordered.

Part of a SCF (SKP1-cullin-F-box) protein ligase complex SCF(FBXO3) consisting of FBXO3, SKP1, CUL1 and RBX1. Interacts with PML, interaction is direct and takes place either alone or within the SCF complex.

It is found in the nucleus. It functions in the pathway protein modification; protein ubiquitination. In terms of biological role, substrate recognition component of the SCF (SKP1-CUL1-F-box protein)-type E3 ubiquitin ligase complex, SCF(FBXO3), which mediates the ubiquitination and subsequent proteasomal degradation of target proteins. Mediates the ubiquitination of HIPK2 and probably that of EP300, leading to rapid degradation by the proteasome. In the presence of PML, HIPK2 ubiquitination still occurs, but degradation is prevented. PML, HIPK2 and FBXO3 may act synergically to activate p53/TP53-dependent transactivation. The SCF(FBXO3) also acts as a regulator of inflammation by mediating ubiquitination and degradation of FBXL2 in response to lipopolysaccharide (LPS). The SCF(FBXO3) complex specifically recognizes FBXL2 phosphorylated at 'Thr-404' and promotes its ubiquitination. The sequence is that of F-box only protein 3 (FBXO3) from Bos taurus (Bovine).